Here is a 179-residue protein sequence, read N- to C-terminus: Ribosome maturation factor RimM (179 aa).

The 77-residue stretch at 100-176 (KEEFHLLELI…FLIINPPNGL (77 aa)) folds into the PRC barrel domain.

The protein belongs to the RimM family. In terms of assembly, binds ribosomal protein uS19.

It localises to the cytoplasm. Functionally, an accessory protein needed during the final step in the assembly of 30S ribosomal subunit, possibly for assembly of the head region. Essential for efficient processing of 16S rRNA. May be needed both before and after RbfA during the maturation of 16S rRNA. It has affinity for free ribosomal 30S subunits but not for 70S ribosomes. The chain is Ribosome maturation factor RimM from Prochlorococcus marinus (strain AS9601).